Consider the following 241-residue polypeptide: DNA repair protein RecO (241 aa).

The protein belongs to the RecO family.

Its function is as follows. Involved in DNA repair and RecF pathway recombination. This Phocaeicola vulgatus (strain ATCC 8482 / DSM 1447 / JCM 5826 / CCUG 4940 / NBRC 14291 / NCTC 11154) (Bacteroides vulgatus) protein is DNA repair protein RecO.